Reading from the N-terminus, the 128-residue chain is Transcription antitermination protein NusB (128 aa).

It belongs to the NusB family.

Its function is as follows. Involved in transcription antitermination. Required for transcription of ribosomal RNA (rRNA) genes. Binds specifically to the boxA antiterminator sequence of the ribosomal RNA (rrn) operons. This is Transcription antitermination protein NusB from Listeria monocytogenes serotype 4b (strain CLIP80459).